Consider the following 131-residue polypeptide: Small ribosomal subunit protein uS8 (131 aa).

It belongs to the universal ribosomal protein uS8 family. In terms of assembly, part of the 30S ribosomal subunit. Contacts proteins S5 and S12.

One of the primary rRNA binding proteins, it binds directly to 16S rRNA central domain where it helps coordinate assembly of the platform of the 30S subunit. The sequence is that of Small ribosomal subunit protein uS8 from Dictyoglomus thermophilum (strain ATCC 35947 / DSM 3960 / H-6-12).